We begin with the raw amino-acid sequence, 215 residues long: UPF0502 protein YceH (215 aa).

The protein belongs to the UPF0502 family.

In Salmonella paratyphi A (strain ATCC 9150 / SARB42), this protein is UPF0502 protein YceH.